The following is a 444-amino-acid chain: uncharacterized protein (444 aa).

A compositionally biased stretch (basic and acidic residues) spans 1 to 11 (MASSAGRDKLR). The interval 1–35 (MASSAGRDKLRSRGQRVFAFGSSTPRDLSHMSKVP) is disordered.

This is an uncharacterized protein from Caenorhabditis elegans.